Consider the following 163-residue polypeptide: Cytochrome c-type biogenesis protein CcmE (163 aa).

Topologically, residues 1 to 7 are cytoplasmic; it reads MTRKQRR. A helical; Signal-anchor for type II membrane protein transmembrane segment spans residues 8-28; sequence LVFIGTCGAVLAVALGLVLWA. Residues 29-163 are Periplasmic-facing; the sequence is MSGTIVFFRS…RTASGEARAP (135 aa). Heme-binding residues include His-122 and Tyr-126. Residues 134-163 are disordered; that stretch reads ALKKSGRWQEGAGHPAPAPPRTASGEARAP.

The protein belongs to the CcmE/CycJ family.

The protein localises to the cell inner membrane. Its function is as follows. Heme chaperone required for the biogenesis of c-type cytochromes. Transiently binds heme delivered by CcmC and transfers the heme to apo-cytochromes in a process facilitated by CcmF and CcmH. This Methylobacterium sp. (strain 4-46) protein is Cytochrome c-type biogenesis protein CcmE.